The chain runs to 364 residues: UDP-N-acetylglucosamine--N-acetylmuramyl-(pentapeptide) pyrophosphoryl-undecaprenol N-acetylglucosamine transferase (364 aa).

UDP-N-acetyl-alpha-D-glucosamine-binding positions include 15–17 (TGG), Asn123, Arg164, Ser191, and Gln286.

The protein belongs to the glycosyltransferase 28 family. MurG subfamily.

The protein localises to the cell inner membrane. It carries out the reaction di-trans,octa-cis-undecaprenyl diphospho-N-acetyl-alpha-D-muramoyl-L-alanyl-D-glutamyl-meso-2,6-diaminopimeloyl-D-alanyl-D-alanine + UDP-N-acetyl-alpha-D-glucosamine = di-trans,octa-cis-undecaprenyl diphospho-[N-acetyl-alpha-D-glucosaminyl-(1-&gt;4)]-N-acetyl-alpha-D-muramoyl-L-alanyl-D-glutamyl-meso-2,6-diaminopimeloyl-D-alanyl-D-alanine + UDP + H(+). It participates in cell wall biogenesis; peptidoglycan biosynthesis. Functionally, cell wall formation. Catalyzes the transfer of a GlcNAc subunit on undecaprenyl-pyrophosphoryl-MurNAc-pentapeptide (lipid intermediate I) to form undecaprenyl-pyrophosphoryl-MurNAc-(pentapeptide)GlcNAc (lipid intermediate II). In Prochlorococcus marinus (strain MIT 9515), this protein is UDP-N-acetylglucosamine--N-acetylmuramyl-(pentapeptide) pyrophosphoryl-undecaprenol N-acetylglucosamine transferase.